The sequence spans 221 residues: Ribonuclease T (221 aa).

One can recognise an Exonuclease domain in the interval 21 to 195 (VVIDIESAGF…YDTIQTAYLF (175 aa)). Positions 24, 26, 182, and 187 each coordinate Mg(2+). His-182 (proton donor/acceptor) is an active-site residue.

The protein belongs to the RNase T family. As to quaternary structure, homodimer. Mg(2+) is required as a cofactor.

Functionally, trims short 3' overhangs of a variety of RNA species, leaving a one or two nucleotide 3' overhang. Responsible for the end-turnover of tRNA: specifically removes the terminal AMP residue from uncharged tRNA (tRNA-C-C-A). Also appears to be involved in tRNA biosynthesis. The protein is Ribonuclease T of Buchnera aphidicola subsp. Cinara cedri (strain Cc).